The following is a 33-amino-acid chain: Cytochrome b6-f complex subunit 8 (33 aa).

Residues 2–22 (LFTFAWASLAAIFTFSIAMVV) form a helical membrane-spanning segment.

Belongs to the PetN family. As to quaternary structure, the 4 large subunits of the cytochrome b6-f complex are cytochrome b6, subunit IV (17 kDa polypeptide, PetD), cytochrome f and the Rieske protein, while the 4 small subunits are PetG, PetL, PetM and PetN. The complex functions as a dimer.

Its subcellular location is the cellular thylakoid membrane. In terms of biological role, component of the cytochrome b6-f complex, which mediates electron transfer between photosystem II (PSII) and photosystem I (PSI), cyclic electron flow around PSI, and state transitions. The polypeptide is Cytochrome b6-f complex subunit 8 (Prochlorococcus marinus (strain SARG / CCMP1375 / SS120)).